Here is a 441-residue protein sequence, read N- to C-terminus: MQPPPSLCGLALLALVLACGMAEVWGEEREMPSAPATPPLLGASEILTPSTKTSWPRDSNASLPRSSAPAEIPKEGRTAGAPRRTPPPCQRPTEIKDTFKYINTVVSCLVFVLGIIGNSTLLRIIYKNKCMRNGPNILIASLALGDLLHIIIDIPINVYKLLAEDWPFGAEMCKLVPFIQKASVGITVLSLCALSIDRYRAVASWSRIKGIGVPKWTAVEIVLIWVVSVILAVPEAIGFNLVTIDYKGSYLRICLLNPTQKTAFMQFYKTAKDWWLFSFYFCLPLAITAFFYTLMTCEMLRKKSGMQIALNDHLKQRREVAKTVFCLVLVFGLCWLALHLSRILKLTLYDQNDPNRCELLSFLLVLDYIGINMASLNSCINPIALYLVSKRFKNCFKSCLCCWCQSFEEKQSLEEKQSCLKFKANDHGYDNFRSSNKYSSS.

The signal sequence occupies residues 1–26 (MQPPPSLCGLALLALVLACGMAEVWG). Over 27–100 (EEREMPSAPA…RPTEIKDTFK (74 aa)) the chain is Extracellular. The segment at 30-90 (EMPSAPATPP…APRRTPPPCQ (61 aa)) is disordered. Residues 47 to 65 (LTPSTKTSWPRDSNASLPR) are compositionally biased toward polar residues. Asn-60 carries N-linked (GlcNAc...) asparagine glycosylation. Residues 101 to 125 (YINTVVSCLVFVLGIIGNSTLLRII) traverse the membrane as a helical segment. The Cytoplasmic segment spans residues 126–136 (YKNKCMRNGPN). Residues 137-162 (ILIASLALGDLLHIIIDIPINVYKLL) traverse the membrane as a helical segment. The Extracellular portion of the chain corresponds to 163–174 (AEDWPFGAEMCK). Residues Cys-173 and Cys-254 are joined by a disulfide bond. A helical transmembrane segment spans residues 175–196 (LVPFIQKASVGITVLSLCALSI). The Cytoplasmic segment spans residues 197–217 (DRYRAVASWSRIKGIGVPKWT). Residues 218–242 (AVEIVLIWVVSVILAVPEAIGFNLV) form a helical membrane-spanning segment. The Extracellular portion of the chain corresponds to 243–270 (TIDYKGSYLRICLLNPTQKTAFMQFYKT). The helical transmembrane segment at 271-295 (AKDWWLFSFYFCLPLAITAFFYTLM) threads the bilayer. The Cytoplasmic segment spans residues 296 to 323 (TCEMLRKKSGMQIALNDHLKQRREVAKT). Ser-304 is modified (phosphoserine). Residues 324-349 (VFCLVLVFGLCWLALHLSRILKLTLY) form a helical membrane-spanning segment. The Extracellular segment spans residues 350–361 (DQNDPNRCELLS). The helical transmembrane segment at 362 to 388 (FLLVLDYIGINMASLNSCINPIALYLV) threads the bilayer. The Cytoplasmic portion of the chain corresponds to 389–441 (SKRFKNCFKSCLCCWCQSFEEKQSLEEKQSCLKFKANDHGYDNFRSSNKYSSS). S-palmitoyl cysteine attachment occurs at residues Cys-402 and Cys-404. Ser-418 carries the post-translational modification Phosphoserine. Phosphotyrosine is present on Tyr-438. 3 positions are modified to phosphoserine: Ser-439, Ser-440, and Ser-441.

Belongs to the G-protein coupled receptor 1 family. Endothelin receptor subfamily. EDNRB sub-subfamily.

The protein resides in the cell membrane. Non-specific receptor for endothelin 1, 2, and 3. Mediates its action by association with G proteins that activate a phosphatidylinositol-calcium second messenger system. This Oryctolagus cuniculus (Rabbit) protein is Endothelin receptor type B (EDNRB).